The chain runs to 169 residues: Large ribosomal subunit protein uL10 (169 aa).

Belongs to the universal ribosomal protein uL10 family. Part of the ribosomal stalk of the 50S ribosomal subunit. The N-terminus interacts with L11 and the large rRNA to form the base of the stalk. The C-terminus forms an elongated spine to which L12 dimers bind in a sequential fashion forming a multimeric L10(L12)X complex.

Its function is as follows. Forms part of the ribosomal stalk, playing a central role in the interaction of the ribosome with GTP-bound translation factors. The polypeptide is Large ribosomal subunit protein uL10 (Rickettsia akari (strain Hartford)).